We begin with the raw amino-acid sequence, 422 residues long: Probable zinc-type alcohol dehydrogenase-like protein L498 (422 aa).

Zn(2+) contacts are provided by cysteine 108, histidine 129, cysteine 160, cysteine 163, cysteine 166, cysteine 174, and cysteine 231.

It depends on Zn(2+) as a cofactor.

It is found in the host cytoplasm. Its subcellular location is the virion. The chain is Probable zinc-type alcohol dehydrogenase-like protein L498 from Acanthamoeba polyphaga (Amoeba).